The sequence spans 483 residues: Succinate semialdehyde dehydrogenase (483 aa).

Residues 156–157, 180–183, and 233–234 contribute to the NAD(+) site; these read WN, KPAP, and GS. Glu255 (proton acceptor) is an active-site residue. An NAD(+)-binding site is contributed by Leu256. Cys289 serves as the catalytic Nucleophile. Glu386 contacts NAD(+).

It belongs to the aldehyde dehydrogenase family. As to quaternary structure, homotetramer.

It catalyses the reaction succinate semialdehyde + NAD(+) + H2O = succinate + NADH + 2 H(+). In terms of biological role, involved in the degradation of the pyridine ring of trigonelline (TG; N-methylnicotinate) into succinate and methylamine as carbon and nitrogen sources, respectively. Catalyzes the NAD(+)-dependent oxidation of succinate semialdehyde to succinate. The chain is Succinate semialdehyde dehydrogenase from Acinetobacter baylyi (strain ATCC 33305 / BD413 / ADP1).